A 215-amino-acid chain; its full sequence is MPSQRHYSPADRLLMQADAALRTLLPFSGQPSRPSPALLKTEAELSESEARHVAGLMRINHTGEVCAQALYQGQALTARLPQVRQAMEQAADEEIDHLAWCEQRIRQLGSHTSVLNPIFYGLSFGIGASAGLISDRISLGFVAATEDQVCKHLDDHLGQLPAGDEKSRAILEQMREDEAQHSTAAIEAGGLRFPAPVKFGMSLVSKVMTKATYRI.

Fe cation is bound by residues E64, E94, H97, E146, E178, and H181.

Belongs to the COQ7 family. Fe cation is required as a cofactor.

The protein resides in the cell membrane. The enzyme catalyses a 5-methoxy-2-methyl-3-(all-trans-polyprenyl)benzene-1,4-diol + AH2 + O2 = a 3-demethylubiquinol + A + H2O. The protein operates within cofactor biosynthesis; ubiquinone biosynthesis. In terms of biological role, catalyzes the hydroxylation of 2-nonaprenyl-3-methyl-6-methoxy-1,4-benzoquinol during ubiquinone biosynthesis. This chain is 3-demethoxyubiquinol 3-hydroxylase, found in Stutzerimonas stutzeri (strain A1501) (Pseudomonas stutzeri).